Reading from the N-terminus, the 141-residue chain is Nuclear receptor 2C2-associated protein (141 aa).

It belongs to the NR2C2AP family.

Its subcellular location is the nucleus. In terms of biological role, may act as a repressor of nr2c2-mediated transactivation by suppressing the binding between nr2c2 and its response element in target genes. This chain is Nuclear receptor 2C2-associated protein (nr2c2ap), found in Danio rerio (Zebrafish).